Consider the following 98-residue polypeptide: Large ribosomal subunit protein eL21 (98 aa).

It belongs to the eukaryotic ribosomal protein eL21 family.

The polypeptide is Large ribosomal subunit protein eL21 (Methanocorpusculum labreanum (strain ATCC 43576 / DSM 4855 / Z)).